The sequence spans 455 residues: Glutamyl-tRNA reductase (455 aa).

Substrate is bound by residues 49-52 (TCNR), Ser109, 114-116 (EAQ), and Gln120. Cys50 (nucleophile) is an active-site residue. Position 190 to 195 (190 to 195 (GAGAMG)) interacts with NADP(+).

Belongs to the glutamyl-tRNA reductase family. In terms of assembly, homodimer.

It catalyses the reaction (S)-4-amino-5-oxopentanoate + tRNA(Glu) + NADP(+) = L-glutamyl-tRNA(Glu) + NADPH + H(+). The protein operates within porphyrin-containing compound metabolism; protoporphyrin-IX biosynthesis; 5-aminolevulinate from L-glutamyl-tRNA(Glu): step 1/2. In terms of biological role, catalyzes the NADPH-dependent reduction of glutamyl-tRNA(Glu) to glutamate 1-semialdehyde (GSA). This is Glutamyl-tRNA reductase from Salinispora arenicola (strain CNS-205).